The primary structure comprises 299 residues: Caspase-1 (299 aa).

Residues 1 to 28 (MLDGKQDNGNVDSVDIKQRTNGGGDEGD) constitute a propeptide that is removed on maturation. The tract at residues 1-45 (MLDGKQDNGNVDSVDIKQRTNGGGDEGDALGSNSSSQPNRVARMP) is disordered. Catalysis depends on residues H136 and C178. The propeptide occupies 185 to 195 (GGITLSRTETD).

The protein belongs to the peptidase C14A family. In terms of assembly, heterotetramer that consists of two anti-parallel arranged heterodimers, each one formed by a 19/18 kDa (p19/18) and a 12 kDa (p12) subunit. In terms of processing, the two subunits are derived from the precursor sequence by an autocatalytic mechanism.

Its function is as follows. Involved in the activation cascade of caspases responsible for apoptosis execution. Inhibited by the baculovirus anti-apoptotic protein p35. Cleaves p35 and nuclear immunophilin FKBP46. The chain is Caspase-1 from Spodoptera frugiperda (Fall armyworm).